A 181-amino-acid chain; its full sequence is NAD(P)H-quinone oxidoreductase subunit I, chloroplastic (181 aa).

4Fe-4S ferredoxin-type domains follow at residues 55 to 84 (GRIH…VDWE) and 95 to 124 (KSYS…MTEE). Cysteine 64, cysteine 67, cysteine 70, cysteine 74, cysteine 104, cysteine 107, cysteine 110, and cysteine 114 together coordinate [4Fe-4S] cluster.

It belongs to the complex I 23 kDa subunit family. NDH is composed of at least 16 different subunits, 5 of which are encoded in the nucleus. It depends on [4Fe-4S] cluster as a cofactor.

The protein resides in the plastid. Its subcellular location is the chloroplast thylakoid membrane. It catalyses the reaction a plastoquinone + NADH + (n+1) H(+)(in) = a plastoquinol + NAD(+) + n H(+)(out). The catalysed reaction is a plastoquinone + NADPH + (n+1) H(+)(in) = a plastoquinol + NADP(+) + n H(+)(out). In terms of biological role, NDH shuttles electrons from NAD(P)H:plastoquinone, via FMN and iron-sulfur (Fe-S) centers, to quinones in the photosynthetic chain and possibly in a chloroplast respiratory chain. The immediate electron acceptor for the enzyme in this species is believed to be plastoquinone. Couples the redox reaction to proton translocation, and thus conserves the redox energy in a proton gradient. This is NAD(P)H-quinone oxidoreductase subunit I, chloroplastic from Physcomitrium patens (Spreading-leaved earth moss).